The primary structure comprises 165 residues: Putative pre-16S rRNA nuclease (165 aa).

This sequence belongs to the YqgF nuclease family.

The protein resides in the cytoplasm. Could be a nuclease involved in processing of the 5'-end of pre-16S rRNA. This is Putative pre-16S rRNA nuclease from Brucella anthropi (strain ATCC 49188 / DSM 6882 / CCUG 24695 / JCM 21032 / LMG 3331 / NBRC 15819 / NCTC 12168 / Alc 37) (Ochrobactrum anthropi).